The chain runs to 359 residues: Protein HEXIM1 (359 aa).

Residues 1–163 (MAEPFLSEYQ…RRRPSKKKRH (163 aa)) form a disordered region. Residues 9–19 (YQHQPQTSNCT) show a composition bias toward polar residues. Composition is skewed to basic and acidic residues over residues 34–47 (PGAE…DSRW) and 84–93 (CLREGEKGQN). Phosphoserine is present on residues serine 97 and serine 98. The span at 148 to 163 (LGKKKHRRRPSKKKRH) shows a compositional bias: basic residues. The tract at residues 150–177 (KKKHRRRPSKKKRHWKPYYKLTWEEKKK) is basic region; mediates nuclear localization and interaction with 7SK snRNA and NR3C1. Residues 202-205 (PYNT) form an interaction with P-TEFb region. Residues 210 to 250 (MDDHDQEEPDLKTGLYSKRAAAKSDDTSDDDFMEEGGEEDG) form an autoinhibitory acidic region; in absence of 7SK snRNA interacts with the basic region preventing interaction with P-TEFb and modulating subcellular localization region. The segment at 213–262 (HDQEEPDLKTGLYSKRAAAKSDDTSDDDFMEEGGEEDGGSDGMGGDGSEF) is disordered. Serine 233 is subject to Phosphoserine. Threonine 236 bears the Phosphothreonine mark. Over residues 236-251 (TSDDDFMEEGGEEDGG) the composition is skewed to acidic residues. A phosphoserine mark is found at serine 237, serine 252, and serine 260. A coiled-coil region spans residues 283 to 349 (SKQELIKEYL…LTENELHRQQ (67 aa)). The mediates interaction with CCNT1 stretch occupies residues 286 to 314 (ELIKEYLELEKCLSRMEDENNRLRLESKR). The segment at 310 to 355 (LESKRLGGDDARVRELELELDRLRAENLQLLTENELHRQQERAPLS) is required for inhibition of ESR1-dependent transcription.

The protein belongs to the HEXIM family. Homooligomer and heterooligomer with HEXIM2; probably dimeric. Core component of the 7SK RNP complex, at least composed of 7SK RNA, LARP7, MEPCE, HEXIM1 (or HEXIM2) and P-TEFb (composed of CDK9 and CCNT1/cyclin-T1). Interacts with the N-CoR complex through NCOR1. Interacts with ESR1 and NR3C1. May interact with NF-kappa-B through RELA. Interacts with CCNT2; mediates formation of a tripartite complex with KPNA2. Part of the HDP-RNP complex composed of at least HEXIM1, PRKDC, XRCC5, XRCC6, paraspeckle proteins (SFPQ, NONO, PSPC1, RBM14, and MATR3) and NEAT1 non-coding RNA. In terms of tissue distribution, ubiquitously expressed with higher expression in placenta. HEXIM1 and HEXIM2 are differentially expressed. Expressed in endocrine tissues.

It localises to the nucleus. The protein resides in the cytoplasm. Functionally, transcriptional regulator which functions as a general RNA polymerase II transcription inhibitor. Core component of the 7SK RNP complex: in cooperation with 7SK snRNA sequesters P-TEFb in a large inactive 7SK snRNP complex preventing RNA polymerase II phosphorylation and subsequent transcriptional elongation. May also regulate NF-kappa-B, ESR1, NR3C1 and CIITA-dependent transcriptional activity. Plays a role in the regulation of DNA virus-mediated innate immune response by assembling into the HDP-RNP complex, a complex that serves as a platform for IRF3 phosphorylation and subsequent innate immune response activation through the cGAS-STING pathway. In Homo sapiens (Human), this protein is Protein HEXIM1 (HEXIM1).